The primary structure comprises 351 residues: (S)-coclaurine N-methyltransferase (351 aa).

S-adenosyl-L-methionine-binding positions include 91–92 (QS), 126–134 (VLDLGCGLG), 130–132 (GCG), and 153–158 (TSSVEQ). Cysteine 326 is a catalytic residue.

The protein belongs to the CFA/CMAS family. In terms of tissue distribution, expressed in roots, stems, flower buds and at lower levels, in leaves. Restricted to sieve elements of the phloem adjacent or proximal to laticifers.

The protein localises to the cytoplasm. The enzyme catalyses (S)-coclaurine + S-adenosyl-L-methionine = (S)-N-methylcoclaurine + S-adenosyl-L-homocysteine + H(+). Its pathway is alkaloid biosynthesis; (S)-reticuline biosynthesis; (S)-reticuline from (S)-norcoclaurine: step 2/4. Its function is as follows. Involved in the biosynthesis of benzylisoquinoline alkaloids. N-methyltransferase methylating (S)-coclaurine. 4'-O-methylcoclaurine and norlaudanine can also be used as substrates. This Papaver somniferum (Opium poppy) protein is (S)-coclaurine N-methyltransferase.